The primary structure comprises 326 residues: UDP-3-O-acylglucosamine N-acyltransferase (326 aa).

The Proton acceptor role is filled by H235.

The protein belongs to the transferase hexapeptide repeat family. LpxD subfamily. In terms of assembly, homotrimer.

The catalysed reaction is a UDP-3-O-[(3R)-3-hydroxyacyl]-alpha-D-glucosamine + a (3R)-hydroxyacyl-[ACP] = a UDP-2-N,3-O-bis[(3R)-3-hydroxyacyl]-alpha-D-glucosamine + holo-[ACP] + H(+). Its pathway is bacterial outer membrane biogenesis; LPS lipid A biosynthesis. Its function is as follows. Catalyzes the N-acylation of UDP-3-O-acylglucosamine using 3-hydroxyacyl-ACP as the acyl donor. Is involved in the biosynthesis of lipid A, a phosphorylated glycolipid that anchors the lipopolysaccharide to the outer membrane of the cell. The chain is UDP-3-O-acylglucosamine N-acyltransferase from Helicobacter hepaticus (strain ATCC 51449 / 3B1).